The sequence spans 249 residues: Ciliogenesis and planar polarity effector 2 (249 aa).

The interval 46–249 (PADVAAYKVF…VIAGLVGGAE (204 aa)) is small GTPase-like. GTP-binding positions include 58-65 (GKSGVGKT) and 171-174 (TKLD).

It belongs to the small GTPase superfamily. Rab family. In terms of assembly, interacts with fuz.

It localises to the cytoplasm. It is found in the cytoskeleton. Its subcellular location is the cilium basal body. Functionally, potential effector of the planar cell polarity signaling pathway. Plays a role in targeted membrane trafficking most probably at the level of vesicle fusion with membranes. Involved in cilium biogenesis by regulating the transport of cargo proteins to the basal body and to the apical tips of cilia. More generally involved in exocytosis in secretory cells. In Xenopus laevis (African clawed frog), this protein is Ciliogenesis and planar polarity effector 2.